The following is a 571-amino-acid chain: Pectinesterase/pectinesterase inhibitor (571 aa).

Residues 27 to 178 (NSHQKAVESL…KILSSNAIDI (152 aa)) are pectinesterase inhibitor. The interval 233 to 254 (AQAGRPGAPADEGIGEGGGGGG) is disordered. The pectinesterase stretch occupies residues 259–558 (THVVAKDGSG…TVANWLTPAN (300 aa)). The substrate site is built by Thr336 and Gln366. Asp389 acts as the Proton donor; for pectinesterase activity in catalysis. Asp410 functions as the Nucleophile; for pectinesterase activity in the catalytic mechanism. Substrate-binding residues include Arg479 and Trp481.

In the N-terminal section; belongs to the PMEI family. It in the C-terminal section; belongs to the pectinesterase family.

It is found in the secreted. Its subcellular location is the cell wall. The catalysed reaction is [(1-&gt;4)-alpha-D-galacturonosyl methyl ester](n) + n H2O = [(1-&gt;4)-alpha-D-galacturonosyl](n) + n methanol + n H(+). It participates in glycan metabolism; pectin degradation; 2-dehydro-3-deoxy-D-gluconate from pectin: step 1/5. Acts in the modification of cell walls via demethylesterification of cell wall pectin. In Brassica campestris (Field mustard), this protein is Pectinesterase/pectinesterase inhibitor.